Here is a 115-residue protein sequence, read N- to C-terminus: Large ribosomal subunit protein bL19 (115 aa).

The protein belongs to the bacterial ribosomal protein bL19 family.

In terms of biological role, this protein is located at the 30S-50S ribosomal subunit interface and may play a role in the structure and function of the aminoacyl-tRNA binding site. The protein is Large ribosomal subunit protein bL19 of Streptococcus sanguinis (strain SK36).